The primary structure comprises 59 residues: Large ribosomal subunit protein uL30 (59 aa).

Belongs to the universal ribosomal protein uL30 family. Part of the 50S ribosomal subunit.

The chain is Large ribosomal subunit protein uL30 from Alteromonas mediterranea (strain DSM 17117 / CIP 110805 / LMG 28347 / Deep ecotype).